The sequence spans 2045 residues: Host cell factor 1 (2045 aa).

A2 bears the N-acetylalanine mark. Position 6 is a phosphoserine (S6). Kelch repeat units lie at residues 44–89, 93–140, 148–194, 217–265, and 266–313; these read LIVV…GFVC, RLLV…RLGH, KCYL…ITYG, KLVI…TIGN, and KMYV…LMDT. Residues K105, K163, and K244 each participate in a glycyl lysine isopeptide (Lys-Gly) (interchain with G-Cter in ubiquitin) cross-link. A Glycyl lysine isopeptide (Lys-Gly) (interchain with G-Cter in SUMO2) cross-link involves residue K282. K288 carries the post-translational modification N6-acetyllysine. Residue K363 forms a Glycyl lysine isopeptide (Lys-Gly) (interchain with G-Cter in ubiquitin) linkage. The 92-residue stretch at 366 to 457 folds into the Fibronectin type-III 1 domain; that stretch reads PPARVQLVRA…VPQAATAPPS (92 aa). A disordered region spans residues 407 to 434; it reads ATATSPTPNPVPSVPANPPKSPAPAAAA. S411 is modified (phosphoserine). The segment covering 413-428 has biased composition (pro residues); it reads TPNPVPSVPANPPKSP. Residues 500–550 form a required for interaction with OGT region; that stretch reads LVTMRPASQAGKAPVTVTSLPASVRMVVPTQSAQGTVIGSNPQMSGMAALA. Omega-N-methylarginine occurs at positions 504 and 524. Residues S598, S666, and S669 each carry the phosphoserine modification. The tract at residues 610 to 722 is interaction with SIN3A; sequence LKTAAAQVGT…KGPLPAGTIL (113 aa). The interval 750–902 is interaction with ZBTB17; that stretch reads ILGISSVSPS…SLAGAGAHST (153 aa). At K813 the chain carries N6-acetyllysine. An interaction with GABP2 region spans residues 813 to 912; sequence KIITAVPKIA…SASLATPITT (100 aa). HCF repeat repeat units follow at residues 1010–1035, 1072–1097, and 1101–1126; these read TLVC…TVVA, VRVC…ATSN, and QHGC…AMSS. The HCF repeat 4; degenerate repeat unit spans residues 1157 to 1182; sequence VQGTVKPQCQTQQTNMTTTTMTVQAT. At S1204 the chain carries Phosphoserine. An Asymmetric dimethylarginine modification is found at R1216. 4 disordered regions span residues 1219–1242, 1302–1375, 1444–1475, and 1494–1525; these read LSGP…YTTN, PCET…TSTG, TVTS…STNI, and TTVT…QLPP. S1223 is subject to Phosphoserine. HCF repeat repeat units lie at residues 1295-1320 and 1323-1348; these read TQVC…SNAG and QRVC…ATSN. Residues 1308 to 1321 show a composition bias toward low complexity; it reads TGTTNTATTSNAGS. Residues 1358–1383 form an HCF repeat 7; degenerate repeat; sequence QQPASGHPCETHQTTSTGTTMSVSVG. An HCF repeat 8 repeat occupies 1423–1448; sequence QRVCSNPPCETHETGTTHTATTVTSN. Residue T1500 is modified to Phosphothreonine. A compositionally biased stretch (pro residues) spans 1502-1511; it reads VPGPSVPPPE. 3 positions are modified to phosphoserine: S1506, S1516, and S1781. 2 consecutive Fibronectin type-III domains span residues 1808–1898 and 1900–2016; these read PPPP…TCLP and FPGA…TSKD. Residues K1817 and K1818 each participate in a glycyl lysine isopeptide (Lys-Gly) (interchain with G-Cter in ubiquitin) cross-link. At S1848 the chain carries Phosphoserine. Residues 2004-2045 are disordered; the sequence is ATQVRWLQETSKDSSGTKPASKRPMSSPEMKSAPKKSKADGQ. K2015 carries the post-translational modification N6-acetyllysine. K2034 is covalently cross-linked (Glycyl lysine isopeptide (Lys-Gly) (interchain with G-Cter in SUMO2)).

As to quaternary structure, composed predominantly of six polypeptides ranging from 110 to 150 kDa and a minor 300 kDa polypeptide. The majority of N- and C-terminal cleavage products remain tightly, albeit non-covalently, associated. Interacts with POU2F1, CREB3, ZBTB17, EGR2, E2F4, CREBZF, SP1, GABP2, Sin3 HDAC complex (SIN3A, HDAC1, HDAC2, SUDS3), SAP30, SIN3B and FHL2. Component of a MLL1 complex, composed of at least the core components KMT2A/MLL1, ASH2L, HCFC1, WDR5 and RBBP5, as well as the facultative components BACC1, CHD8, DPY30, E2F6, HCFC2, HSP70, INO80C, KANSL1, LAS1L, MAX, MCRS1, MEN1, MGA, KAT8, PELP1, PHF20, PRP31, RING2, RUVBL1, RUVBL2, SENP3, TAF1, TAF4, TAF6, TAF7, TAF9 and TEX10. Component of a THAP1/THAP3-HCFC1-OGT complex that is required for the regulation of the transcriptional activity of RRM1. Interacts directly with THAP3 (via its HBM). Interacts (via the Kelch-repeat domain) with THAP1 (via the HBM); the interaction recruits HCHC1 to the RRM1. Interacts with THAP7 and THAP11 (via the HMB). Interacts directly with OGT; the interaction, which requires the HCFC1 cleavage site domain, glycosylates and promotes the proteolytic processing of HCFC1 and retains OGT in the nucleus. Component of the SET1 complex, at least composed of the catalytic subunit (SETD1A or SETD1B), WDR5, WDR82, RBBP5, ASH2L, CXXC1, HCFC1 and DPY30. Component of the NSL complex at least composed of MOF/KAT8, KANSL1, KANSL2, KANSL3, MCRS1, PHF20, OGT1/OGT, WDR5 and HCFC1. Component of a complex at least composed of ZNF335, HCFC1, CCAR2, EMSY, MKI67, RBBP5, ASH2L and WDR5; the complex is formed as a result of interactions between components of a nuclear receptor-mediated transcription complex and a histone methylation complex. Within the complex interacts with ZNF335. Interacts with TET2 and TET3. Interacts with HCFC1R1. Interacts with THAP11. Interacts (via Kelch domain) with KMT2E (via HBM motif). Interacts with E2F1. Accessory scaffold component of the polycomb repressive deubiquitinase (PR-DUB) complex, at least composed of BAP1, one of ASXL1, ASXL2 or (probably) ASXL3 and one of MBD5 or MBD6; the PR-DUB core associates with a number of accessory proteins, including FOXK1, FOXK2, KDM1B, HCFC1, YY1 and OGT. Interacts with YY1 (via Gly-rich region); the interaction is direct. Interacts with BAP1 (via HBM-like motif). In terms of processing, proteolytically cleaved at one or several PPCE--THET sites within the HCF repeats. Further cleavage of the primary N- and C-terminal chains results in a 'trimming' and accumulation of the smaller chains. Cleavage is promoted by O-glycosylation. Post-translationally, O-glycosylated. GlcNAcylation by OGT promotes proteolytic processing. Ubiquitinated. Lys-1817 and Lys-1818 are ubiquitinated both via 'Lys-48'- and 'Lys-63'-linked polyubiquitin chains. BAP1 mediated deubiquitination of 'Lys-48'-linked polyubiquitin chains; deubiquitination by BAP1 does not seem to stabilize the protein. Expressed in liver, pituitary gland, skeletal muscle, kidney, eye and brain (at protein level). Also observed at low level in heart, spleen and lung.

Its subcellular location is the nucleus. It is found in the cytoplasm. Its function is as follows. Transcriptional coregulator. Serves as a scaffold protein, bridging interactions between transcription factors, including THAP11 and ZNF143, and transcriptional coregulators. Involved in control of the cell cycle. Also antagonizes transactivation by ZBTB17 and GABP2; represses ZBTB17 activation of the p15(INK4b) promoter and inhibits its ability to recruit p300. Coactivator for EGR2 and GABP2. Tethers the chromatin modifying Set1/Ash2 histone H3 'Lys-4' methyltransferase (H3K4me) and Sin3 histone deacetylase (HDAC) complexes (involved in the activation and repression of transcription respectively) together. As part of the NSL complex it may be involved in acetylation of nucleosomal histone H4 on several lysine residues. Recruits KMT2E to E2F1 responsive promoters promoting transcriptional activation and thereby facilitates G1 to S phase transition. Modulates expression of homeobox protein PDX1, perhaps acting in concert with transcription factor E2F1, thereby regulating pancreatic beta-cell growth and glucose-stimulated insulin secretion. May negatively modulate transcriptional activity of FOXO3. The chain is Host cell factor 1 from Mus musculus (Mouse).